Consider the following 1456-residue polypeptide: Leucine-rich repeat-containing protein 9 (1456 aa).

LRR repeat units follow at residues 53–78 (FHNL…CLQL), 97–119 (CRNL…LEKL), 120–141 (IKLE…LQTL), 142–164 (KNLK…LDPN), 166–188 (QLEK…NLTK), 190–212 (TRLK…QLCN), 224–248 (LQRL…AMKK), and 264–287 (NEEL…RIKL). The segment at 305 to 325 (SSKGQSDTTPEAEKPRNSEVV) is disordered. The stretch at 339–362 (LSALDDRVTFWNKKLHEIEAIYRT) is one LRR 9 repeat. Tyr-525 is subject to Phosphotyrosine. LRR repeat units lie at residues 661 to 683 (KPRP…TNIY), 684 to 705 (SHIV…LAKL), 706 to 727 (TGLR…VYHL), 729 to 748 (NLEY…GFRG), 749 to 772 (LMKL…INVL), 776 to 802 (TTSL…VIGR), 806 to 833 (LTHL…KITQ), 876 to 898 (YSKI…LEKL), 899 to 920 (ENLK…LESC), 921 to 942 (VNLE…ITRL), 943 to 965 (TKLS…TFDN), 967 to 991 (LHLH…TFTL), 993 to 1010 (ELYI…IYNL), 1013 to 1037 (LCNL…RFFV), 1082 to 1105 (FIQM…PVDH), 1106 to 1128 (FRNV…LIYL), 1129 to 1151 (PNVK…LKPQ), 1191 to 1214 (MQSL…QLNR), 1215 to 1237 (LRNL…LDNL), 1238 to 1260 (IVLQ…AFSK), 1262 to 1283 (SSLL…LQSL), 1284 to 1307 (VKLE…KLDV), and 1309 to 1335 (PSLR…IFRL).

The sequence is that of Leucine-rich repeat-containing protein 9 (Lrrc9) from Mus musculus (Mouse).